We begin with the raw amino-acid sequence, 500 residues long: Aldehyde dehydrogenase (500 aa).

246 to 251 (GSTLVG) lines the NAD(+) pocket. Glu-269 serves as the catalytic Proton acceptor. The Nucleophile role is filled by Cys-303.

The protein belongs to the aldehyde dehydrogenase family.

It carries out the reaction an aldehyde + NAD(+) + H2O = a carboxylate + NADH + 2 H(+). Its pathway is alcohol metabolism; ethanol degradation; acetate from ethanol: step 2/2. The chain is Aldehyde dehydrogenase (aldA) from Agaricus bisporus (White button mushroom).